The chain runs to 373 residues: Cathecol O-methyltransferase 1 (373 aa).

S-adenosyl-L-homocysteine is bound by residues Gly-209, Asp-232, Asp-252, Met-253, Met-265, and Lys-266. Residue Asp-232 participates in S-adenosyl-L-methionine binding. The active-site Proton acceptor is the His-279.

It belongs to the class I-like SAM-binding methyltransferase superfamily. Cation-independent O-methyltransferase family. COMT subfamily.

The catalysed reaction is catechol + S-adenosyl-L-methionine = guaiacol + S-adenosyl-L-homocysteine + H(+). In terms of biological role, O-methyltransferase that catalyzes the conversion of catechol to guaiacol. Involved in the production of guaiacol in fruits. The polypeptide is Cathecol O-methyltransferase 1 (Solanum lycopersicum (Tomato)).